The following is a 469-amino-acid chain: Sulfate adenylyltransferase subunit 1 (469 aa).

In terms of domain architecture, tr-type G spans lysine 22 to glutamate 237. The segment at glycine 31–serine 38 is G1. Glycine 31 to serine 38 contributes to the GTP binding site. The tract at residues glycine 89–aspartate 93 is G2. The segment at aspartate 110 to glycine 113 is G3. Residues aspartate 110–histidine 114 and asparagine 165–aspartate 168 contribute to the GTP site. Positions asparagine 165–aspartate 168 are G4. Positions serine 202–lysine 204 are G5.

It belongs to the TRAFAC class translation factor GTPase superfamily. Classic translation factor GTPase family. CysN/NodQ subfamily. In terms of assembly, heterodimer composed of CysD, the smaller subunit, and CysN.

It catalyses the reaction sulfate + ATP + H(+) = adenosine 5'-phosphosulfate + diphosphate. Its pathway is sulfur metabolism; hydrogen sulfide biosynthesis; sulfite from sulfate: step 1/3. Functionally, with CysD forms the ATP sulfurylase (ATPS) that catalyzes the adenylation of sulfate producing adenosine 5'-phosphosulfate (APS) and diphosphate, the first enzymatic step in sulfur assimilation pathway. APS synthesis involves the formation of a high-energy phosphoric-sulfuric acid anhydride bond driven by GTP hydrolysis by CysN coupled to ATP hydrolysis by CysD. The sequence is that of Sulfate adenylyltransferase subunit 1 from Methylorubrum extorquens (strain CM4 / NCIMB 13688) (Methylobacterium extorquens).